The chain runs to 359 residues: Membrane-bound lytic murein transglycosylase C (359 aa).

Positions Met-1–Ser-16 are cleaved as a signal peptide. The N-palmitoyl cysteine moiety is linked to residue Cys-17. Cys-17 is lipidated: S-diacylglycerol cysteine.

This sequence belongs to the transglycosylase Slt family.

Its subcellular location is the cell outer membrane. The catalysed reaction is Exolytic cleavage of the (1-&gt;4)-beta-glycosidic linkage between N-acetylmuramic acid (MurNAc) and N-acetylglucosamine (GlcNAc) residues in peptidoglycan, from either the reducing or the non-reducing ends of the peptidoglycan chains, with concomitant formation of a 1,6-anhydrobond in the MurNAc residue.. Functionally, murein-degrading enzyme. May play a role in recycling of muropeptides during cell elongation and/or cell division. This is Membrane-bound lytic murein transglycosylase C from Escherichia coli (strain SMS-3-5 / SECEC).